Here is a 220-residue protein sequence, read N- to C-terminus: Zinc-finger homeodomain protein 2 (220 aa).

Positions 1-11 (MNFEDQEEDME) are enriched in acidic residues. Residues 1–40 (MNFEDQEEDMEMSGVNPPCGYDSLSGEGATSSGGGGVGRS) are disordered. The segment covering 31–40 (SSGGGGVGRS) has biased composition (gly residues). Residues 49–98 (YRECLKNHAVNIGGHAVDGCCEFMPSGEDGTLDALKCAACGCHRNFHRKE) form a ZF-HD dimerization-type zinc finger. The interval 100 to 160 (ESIGGRAHRV…SSSGGTTKRF (61 aa)) is disordered. Positions 157 to 220 (TKRFRTKFTA…NNKNSLGKKP (64 aa)) form a DNA-binding region, homeobox; atypical.

As to quaternary structure, homo or heterodimer. Interacts with ZHD1, ZHD3, ZHD4, ZHD5, ZHD6, ZHD7, ZHD8, ZHD9, ZHD10 and ZHD11. In terms of tissue distribution, mostly expressed in flowers and, to a lower extent, in inflorescence, stems and leaves.

Its subcellular location is the nucleus. Functionally, essential protein. Putative transcription factor. In Arabidopsis thaliana (Mouse-ear cress), this protein is Zinc-finger homeodomain protein 2 (ZHD1).